The primary structure comprises 353 residues: MLEMLMQWYRRRFSDPEAIALLVILVAGFGIIFFFSGLLAPLLVAIVLAYLLEWPTVRLQSIGCSRRWATSIVLVVFVGILLLMAFVVLPIAWQQGIYLIRDMPGMLNKLSDFAATLPRRYPALMDAGIIDAMAENMRSRMLTMGDSVVKISLASLVGLLTIAVYLVLVPLMVFFLLKDKEQMLNAVRRVLPRNRGLAGQVWKEMNQQITNYIRGKVLEMIVVGIATWLGFLLFGLNYSLLLAVLVGFSVLIPYIGAFVVTIPVVGVALFQFGAGTEFWSCFAVYLIIQALDGNLLVPVLFSEAVNLHPLVIILSVVIFGGLWGFWGVFFAIPLATLIKAVIHAWPDGQIAQE.

The next 7 helical transmembrane spans lie at 19 to 39 (IALL…SGLL), 72 to 92 (IVLV…LPIA), 156 to 176 (LVGL…VFFL), 217 to 237 (VLEM…FGLN), 240 to 260 (LLLA…AFVV), 281 to 301 (CFAV…PVLF), and 310 to 330 (LVII…GVFF).

Belongs to the autoinducer-2 exporter (AI-2E) (TC 2.A.86) family.

It is found in the cell membrane. The sequence is that of Putative permease PerM (perM) from Escherichia coli O157:H7.